The primary structure comprises 154 residues: Ascorbate-specific PTS system EIIA component (154 aa).

The 145-residue stretch at 6–150 folds into the PTS EIIA type-2 domain; sequence SLAENNSIRL…QEVLDLIDRT (145 aa). The active-site Tele-phosphohistidine intermediate is His-68. The residue at position 68 (His-68) is a Phosphohistidine.

The protein localises to the cytoplasm. In terms of biological role, the phosphoenolpyruvate-dependent sugar phosphotransferase system (sugar PTS), a major carbohydrate active transport system, catalyzes the phosphorylation of incoming sugar substrates concomitantly with their translocation across the cell membrane. The enzyme II UlaABC PTS system is involved in ascorbate transport. The chain is Ascorbate-specific PTS system EIIA component (ulaC) from Salmonella typhi.